A 772-amino-acid polypeptide reads, in one-letter code: U3 small nucleolar RNA-associated protein 25 homolog (772 aa).

Residues 1–179 form a disordered region; that stretch reads MGKRRNRGRS…SEEFTDVKHE (179 aa). 2 promotes p53/TP53 degradation regions span residues 1-201 and 589-651; these read MGKR…SQRP and VQLP…KKEE. At Ser10 the chain carries Phosphoserine. The segment covering 25–43 has biased composition (basic and acidic residues); the sequence is RDFGEEHPFYDRVSKKEAK. 3 positions are modified to phosphoserine: Ser52, Ser60, and Ser64. Positions 54 to 70 are enriched in basic and acidic residues; the sequence is DSSHSESESESEQEHVS. Residues 84-124 show a composition bias toward acidic residues; the sequence is EEEEEEEEEEEEEEEEEEEEEEEEEDDSAVGDAEMNEEAGS. The segment covering 127-136 has biased composition (low complexity); that stretch reads GSVGEAAVSE. Positions 169–179 are enriched in basic and acidic residues; the sequence is SSEEFTDVKHE. The tract at residues 652 to 713 is represses p53/TP53 degradation; that stretch reads LNFTHICEYT…YELPTYPHFY (62 aa).

The protein belongs to the UTP25 family. In terms of assembly, interacts with CAPN3; the interaction is required for CAPN3 translocation to the nucleolus. Post-translationally, phosphorylated. Phosphorylation is required to promote p53/TP53 degradation in the nucleolus which promotes cell cycle progression and liver development. Expressed in all tissues tested: brain, small intestine, large intestine, stomach, liver, spleen, thymus, lung, kidney and testes (at protein level).

The protein resides in the nucleus. Its subcellular location is the nucleolus. Its function is as follows. Component of the ribosomal small subunit processome for the biogenesis of ribosomes, functions in pre-ribosomal RNA (pre-rRNA) processing. Essential for embryonic development in part through the regulation of p53 pathway. Controls the expansion growth of digestive organs and liver. Also involved in the sympathetic neuronal development. Mediates, with CAPN3, the proteasome-independent degradation of p53/TP53. This chain is U3 small nucleolar RNA-associated protein 25 homolog, found in Mus musculus (Mouse).